A 154-amino-acid polypeptide reads, in one-letter code: Large ribosomal subunit protein uL13 (154 aa).

It belongs to the universal ribosomal protein uL13 family. As to quaternary structure, part of the 50S ribosomal subunit.

Functionally, this protein is one of the early assembly proteins of the 50S ribosomal subunit, although it is not seen to bind rRNA by itself. It is important during the early stages of 50S assembly. This Brucella canis (strain ATCC 23365 / NCTC 10854 / RM-666) protein is Large ribosomal subunit protein uL13.